A 953-amino-acid polypeptide reads, in one-letter code: Valine--tRNA ligase (953 aa).

The 'HIGH' region signature appears at 42–52; sequence PNVTGSLHMGH. The 'KMSKS' region signature appears at 554-558; sequence KMSKS. Lysine 557 is an ATP binding site. Residues 884 to 953 adopt a coiled-coil conformation; that stretch reads LIDKDAELAR…EAQKETIAAL (70 aa).

Belongs to the class-I aminoacyl-tRNA synthetase family. ValS type 1 subfamily. As to quaternary structure, monomer.

It is found in the cytoplasm. The catalysed reaction is tRNA(Val) + L-valine + ATP = L-valyl-tRNA(Val) + AMP + diphosphate. In terms of biological role, catalyzes the attachment of valine to tRNA(Val). As ValRS can inadvertently accommodate and process structurally similar amino acids such as threonine, to avoid such errors, it has a 'posttransfer' editing activity that hydrolyzes mischarged Thr-tRNA(Val) in a tRNA-dependent manner. The sequence is that of Valine--tRNA ligase from Photobacterium profundum (strain SS9).